Here is a 429-residue protein sequence, read N- to C-terminus: MSKFLDTAIEAIAAREILDSRGRPTIEAEVHLANGVVGLAQVPSGASTGSFEAHELRDGDKSRYGGKGVLKAVKNVKEALAPKLLGLDALNQELLDRTMIAIDGSPNKSSLGANAILGVSLAAAKAGAESLDIPLYRYLGGPLANLLPVPLMNVINGGAHASNNVDFQEFMIVPIGATSFREALRWGAEVFATLSQVLDEKGLLTGVGDEGGFAPNLESNQVALELLVAAIKKAGYKPGEEVALALDVAASEFYKNGQYVYDGKPHAPAEFIDYLGQLVDQYPIVSIEDGLHEEDWQSWQLLTQKLGSQVQLVGDDLFVTNATRLQRGIEEKAANAILIKLNQIGSLTETLETIDLATRNSIRSVISHRSGETEDTTIADLAVATRAGQIKTGSLCRSERVAKYNRLLRIEDELGDRAVYAGAVGLGPK.

Residue Q168 coordinates (2R)-2-phosphoglycerate. E210 functions as the Proton donor in the catalytic mechanism. Mg(2+) contacts are provided by D247, E288, and D315. Residues K340, R369, S370, and K391 each contribute to the (2R)-2-phosphoglycerate site. K340 serves as the catalytic Proton acceptor.

It belongs to the enolase family. Mg(2+) serves as cofactor.

It is found in the cytoplasm. The protein localises to the secreted. Its subcellular location is the cell surface. The catalysed reaction is (2R)-2-phosphoglycerate = phosphoenolpyruvate + H2O. It functions in the pathway carbohydrate degradation; glycolysis; pyruvate from D-glyceraldehyde 3-phosphate: step 4/5. In terms of biological role, catalyzes the reversible conversion of 2-phosphoglycerate (2-PG) into phosphoenolpyruvate (PEP). It is essential for the degradation of carbohydrates via glycolysis. This Nostoc punctiforme (strain ATCC 29133 / PCC 73102) protein is Enolase.